A 358-amino-acid polypeptide reads, in one-letter code: tRNA-specific 2-thiouridylase MnmA (358 aa).

Residues 10 to 17 (AMSGGVDS) and methionine 36 each bind ATP. Residue cysteine 105 is the Nucleophile of the active site. Cysteine 105 and cysteine 202 are oxidised to a cystine. Residue glycine 129 coordinates ATP. An interaction with tRNA region spans residues 152–154 (KDQ). Cysteine 202 serves as the catalytic Cysteine persulfide intermediate. The interval 308-309 (RY) is interaction with tRNA.

It belongs to the MnmA/TRMU family.

It localises to the cytoplasm. The catalysed reaction is S-sulfanyl-L-cysteinyl-[protein] + uridine(34) in tRNA + AH2 + ATP = 2-thiouridine(34) in tRNA + L-cysteinyl-[protein] + A + AMP + diphosphate + H(+). Its function is as follows. Catalyzes the 2-thiolation of uridine at the wobble position (U34) of tRNA, leading to the formation of s(2)U34. The polypeptide is tRNA-specific 2-thiouridylase MnmA (Magnetococcus marinus (strain ATCC BAA-1437 / JCM 17883 / MC-1)).